A 127-amino-acid polypeptide reads, in one-letter code: Biogenesis of lysosome-related organelles complex 1 subunit 2 (127 aa).

The protein belongs to the BLOC1S2 family. Component of the biogenesis of lysosome-related organelles complex-1 (BLOC-1). Interacts with BLOS1 and SNX1.

It localises to the cytoplasm. Its subcellular location is the endosome. Its function is as follows. Component of the biogenesis of lysosome-related organelles complex-1 (BLOC-1), a complex that mediates the vacuolar degradative transport via the intracellular vesicle trafficking from the endosome to the vacuole. This is Biogenesis of lysosome-related organelles complex 1 subunit 2 (BLOS2) from Arabidopsis thaliana (Mouse-ear cress).